The following is a 236-amino-acid chain: Small ribosomal subunit protein uS3 (236 aa).

Residues 39–107 (IREFLTEELK…DTSLNIVEVR (69 aa)) enclose the KH type-2 domain. Positions 214–236 (ASERRAVEGDNQGSSSNRRRENA) are disordered.

Belongs to the universal ribosomal protein uS3 family. Part of the 30S ribosomal subunit. Forms a tight complex with proteins S10 and S14.

In terms of biological role, binds the lower part of the 30S subunit head. Binds mRNA in the 70S ribosome, positioning it for translation. The chain is Small ribosomal subunit protein uS3 from Brucella canis (strain ATCC 23365 / NCTC 10854 / RM-666).